The following is a 107-amino-acid chain: Phosphoribosyl-ATP pyrophosphatase (107 aa).

Belongs to the PRA-PH family.

Its subcellular location is the cytoplasm. It catalyses the reaction 1-(5-phospho-beta-D-ribosyl)-ATP + H2O = 1-(5-phospho-beta-D-ribosyl)-5'-AMP + diphosphate + H(+). It functions in the pathway amino-acid biosynthesis; L-histidine biosynthesis; L-histidine from 5-phospho-alpha-D-ribose 1-diphosphate: step 2/9. This Bacillus cereus (strain Q1) protein is Phosphoribosyl-ATP pyrophosphatase.